Consider the following 294-residue polypeptide: uncharacterized protein (294 aa).

3 disordered regions span residues 1-30 (MKRQRPQDSMISVPLQNENSTTTPTKEVSH), 51-86 (ALSDITPDTPPAFKTPYSSLPYNLVPQNSSTSKKRP), and 250-294 (DELN…STST). 3 stretches are compositionally biased toward polar residues: residues 7–26 (QDSMISVPLQNENSTTTPTK), 66–81 (PYSSLPYNLVPQNSST), and 255–277 (PMNNNDTPITNSTHSAQMSNLPT).

The protein resides in the nucleus. This is an uncharacterized protein from Schizosaccharomyces pombe (strain 972 / ATCC 24843) (Fission yeast).